A 507-amino-acid chain; its full sequence is Cytochrome P450 71A4 (507 aa).

A helical transmembrane segment spans residues 3-23 (VPCLWYSLLILLLLFIFLLIH). C448 contacts heme.

Belongs to the cytochrome P450 family. Requires heme as cofactor.

It localises to the membrane. May have a role in maturation, such as during flavor formation or other metabolite production specific to aging tissues. The protein is Cytochrome P450 71A4 (CYP71A4) of Solanum melongena (Eggplant).